A 492-amino-acid polypeptide reads, in one-letter code: Glutamyl-tRNA(Gln) amidotransferase subunit A (492 aa).

Catalysis depends on charge relay system residues Lys79 and Ser154. Ser178 (acyl-ester intermediate) is an active-site residue.

It belongs to the amidase family. GatA subfamily. As to quaternary structure, heterotrimer of A, B and C subunits.

It catalyses the reaction L-glutamyl-tRNA(Gln) + L-glutamine + ATP + H2O = L-glutaminyl-tRNA(Gln) + L-glutamate + ADP + phosphate + H(+). Its function is as follows. Allows the formation of correctly charged Gln-tRNA(Gln) through the transamidation of misacylated Glu-tRNA(Gln) in organisms which lack glutaminyl-tRNA synthetase. The reaction takes place in the presence of glutamine and ATP through an activated gamma-phospho-Glu-tRNA(Gln). The sequence is that of Glutamyl-tRNA(Gln) amidotransferase subunit A from Acinetobacter baumannii (strain ATCC 17978 / DSM 105126 / CIP 53.77 / LMG 1025 / NCDC KC755 / 5377).